Reading from the N-terminus, the 263-residue chain is Regulatory protein RecX (263 aa).

The protein belongs to the RecX family.

The protein localises to the cytoplasm. In terms of biological role, modulates RecA activity. The chain is Regulatory protein RecX from Bacillus velezensis (strain DSM 23117 / BGSC 10A6 / LMG 26770 / FZB42) (Bacillus amyloliquefaciens subsp. plantarum).